We begin with the raw amino-acid sequence, 265 residues long: Glutamate 5-kinase (265 aa).

Lysine 15 serves as a coordination point for ATP. Substrate contacts are provided by serine 55, aspartate 142, and asparagine 158. Residues 178 to 179 (SD) and 220 to 226 (TGGMVTK) contribute to the ATP site.

The protein belongs to the glutamate 5-kinase family.

It is found in the cytoplasm. The catalysed reaction is L-glutamate + ATP = L-glutamyl 5-phosphate + ADP. It participates in amino-acid biosynthesis; L-proline biosynthesis; L-glutamate 5-semialdehyde from L-glutamate: step 1/2. In terms of biological role, catalyzes the transfer of a phosphate group to glutamate to form L-glutamate 5-phosphate. The chain is Glutamate 5-kinase from Lactiplantibacillus plantarum (strain ATCC BAA-793 / NCIMB 8826 / WCFS1) (Lactobacillus plantarum).